A 103-amino-acid chain; its full sequence is Histone H4 (103 aa).

The span at 1–14 (MSGRGKGGKGLGKG) shows a compositional bias: gly residues. The interval 1–20 (MSGRGKGGKGLGKGGAKRHR) is disordered. At serine 2 the chain carries N-acetylserine. An N6-acetyl-N6-methyllysine; alternate mark is found at lysine 6 and lysine 13. Lysine 17 carries the N6-acetyllysine modification. A DNA-binding region spans residues 17-21 (KRHRK). Lysine 21 is subject to N6-methyllysine.

Belongs to the histone H4 family. The nucleosome is a histone octamer containing two molecules each of H2A, H2B, H3 and H4 assembled in one H3-H4 heterotetramer and two H2A-H2B heterodimers. The octamer wraps approximately 147 bp of DNA.

The protein localises to the nucleus. Its subcellular location is the chromosome. Functionally, core component of nucleosome. Nucleosomes wrap and compact DNA into chromatin, limiting DNA accessibility to the cellular machineries which require DNA as a template. Histones thereby play a central role in transcription regulation, DNA repair, DNA replication and chromosomal stability. DNA accessibility is regulated via a complex set of post-translational modifications of histones, also called histone code, and nucleosome remodeling. The polypeptide is Histone H4 (Holothuria tubulosa (Tubular sea cucumber)).